Consider the following 2311-residue polypeptide: C2 domain-containing protein 3 (2311 aa).

Disordered regions lie at residues 447 to 511 (SDSS…TSRC) and 543 to 562 (GTAV…RPVR). Residues 470 to 509 (IALDRGRHRDNSPSEYKEDAKQTKGNDSLRDSKTSEKSTS) show a composition bias toward basic and acidic residues. 6 C2 domains span residues 508-666 (TSRC…SVTC), 751-888 (GNGG…TRLL), 952-1112 (LDPP…HRED), 1136-1303 (PSGL…SGWY), 1370-1505 (HKRE…TLAV), and 1581-1713 (KTEV…CGWY). The interval 939-964 (GTSQTAMPRPAHFLDPPLSSSQMGRP) is disordered. 5 disordered regions span residues 1536–1589 (PSNS…LLDA), 1955–1977 (SEAY…GSLN), 2036–2065 (MTDR…PVNP), 2084–2233 (NDPS…SNLL), and 2261–2292 (VREG…PKEE). Basic and acidic residues-rich tracts occupy residues 1565-1589 (FEEK…LLDA) and 1955-1964 (SEAYEREGQR). A compositionally biased stretch (polar residues) spans 2036–2047 (MTDRTSPWSSIL). Residues 2048–2059 (SERDSDSMDHPQ) are compositionally biased toward basic and acidic residues. The span at 2084-2095 (NDPSSVLSSARS) shows a compositional bias: polar residues. A compositionally biased stretch (acidic residues) spans 2138–2151 (AESEAESQEMDGDP). The segment covering 2221–2233 (GSESPQVPPSNLL) has biased composition (polar residues).

The protein localises to the cytoplasm. The protein resides in the cytoskeleton. Its subcellular location is the cilium basal body. It is found in the microtubule organizing center. It localises to the centrosome. The protein localises to the centriole. Its function is as follows. Component of the centrioles that acts as a positive regulator of centriole elongation. Promotes assembly of centriolar distal appendage, a structure at the distal end of the mother centriole that acts as an anchor of the cilium. Required for primary cilium formation. The protein is C2 domain-containing protein 3 (c2cd3) of Xenopus tropicalis (Western clawed frog).